Reading from the N-terminus, the 423-residue chain is 5-hydroxytryptamine receptor 1A (423 aa).

The Extracellular segment spans residues 1–38 (MEGLSPRQGNNTTSSEGPFGTLGNATGISDVTFSYQVI). N10, N11, and N24 each carry an N-linked (GlcNAc...) asparagine glycan. A helical membrane pass occupies residues 39–59 (TSLLLGTLIFCAVLGNACVVA). At 60 to 73 (AIALERSLQNVANY) the chain is on the cytoplasmic side. The helical transmembrane segment at 74-98 (LIGSLAVTDLMVSVLVLPMAALYQV) threads the bilayer. The Extracellular portion of the chain corresponds to 99–107 (LNKWTLGQV). The helical transmembrane segment at 108-132 (TCDLFIALDVLCCTSSILHLCAIAL) threads the bilayer. A disulfide bridge connects residues C109 and C187. Serotonin-binding residues include D116 and C120. The short motif at 133–135 (DRY) is the DRY motif; important for ligand-induced conformation changes element. Residues 133-152 (DRYWAITDPIDYVNKRTPRR) lie on the Cytoplasmic side of the membrane. The helical transmembrane segment at 153–174 (AAALISLTWLIGFLISIPPMLG) threads the bilayer. The Extracellular portion of the chain corresponds to 175-193 (WRTPEDRSDPDACTISKDH). The chain crosses the membrane as a helical span at residues 194–216 (GYTIYSTFGAFYIPLLLMLVLYG). The Cytoplasmic segment spans residues 217-346 (RIFRAARFRI…LARERKTVKT (130 aa)). Residues 235–277 (RKGADARSGVSPAPQPRKSVNGEPGGREWRQGPGSQAGGPLCT) are disordered. Positions 345, 346, and 352 each coordinate 1D-myo-inositol 4-phosphate. A helical membrane pass occupies residues 347 to 370 (LGIIMGTFILCWLPFFIVALVLPF). Topologically, residues 371-378 (CESSCHMP) are extracellular. The chain crosses the membrane as a helical span at residues 379-403 (TLLGAIINWLGYSNSLLNPVIYAYF). The NPxxY motif; important for ligand-induced conformation changes and signaling signature appears at 396–400 (NPVIY). 1D-myo-inositol 4-phosphate contacts are provided by F403, N404, and K405. Topologically, residues 404–423 (NKDFQNAFKKIVRCKFCRRR) are cytoplasmic.

This sequence belongs to the G-protein coupled receptor 1 family. 5-hydroxytryptamine receptor subfamily. HTR1A sub-subfamily. As to quaternary structure, heterodimer; heterodimerizes with GPER1. Interacts with YIF1B. Interacts with GPR39 and GALR1.

The protein localises to the cell membrane. It localises to the cell projection. The protein resides in the dendrite. G-protein coupled receptor activity is regulated by lipids: phosphatidylinositol 4-phosphate increases HTR1A-mediated activity. Functionally, G-protein coupled receptor for 5-hydroxytryptamine (serotonin). Also functions as a receptor for various drugs and psychoactive substances. Ligand binding causes a conformation change that triggers signaling via guanine nucleotide-binding proteins (G proteins) and modulates the activity of downstream effectors, such as adenylate cyclase. HTR1A is coupled to G(i)/G(o) G alpha proteins and mediates inhibitory neurotransmission: signaling inhibits adenylate cyclase activity and activates a phosphatidylinositol-calcium second messenger system that regulates the release of Ca(2+) ions from intracellular stores. Beta-arrestin family members regulate signaling by mediating both receptor desensitization and resensitization processes. The protein is 5-hydroxytryptamine receptor 1A (HTR1A) of Canis lupus familiaris (Dog).